Reading from the N-terminus, the 626-residue chain is Myelin-associated glycoprotein (626 aa).

Positions 1-19 (MIFLTTLPLFWIMISASRG) are cleaved as a signal peptide. Residues 20-325 (GHWGAWMPSS…RTVELSVMYA (306 aa)) are interaction with RTN4R and RTN4RL2. The Extracellular segment spans residues 20-516 (GHWGAWMPSS…HRLMWAKIGP (497 aa)). The region spanning 22 to 120 (WGAWMPSSIS…LGGKYYFRGD (99 aa)) is the Ig-like V-type domain. 3 disulfide bridges follow: Cys-37/Cys-165, Cys-42/Cys-100, and Cys-159/Cys-217. Residue 65–67 (YPK) participates in a ganglioside GT1b (d18:1(4E)) binding. Residue Asn-99 is glycosylated (N-linked (GlcNAc...) asparagine). A ganglioside GT1b (d18:1(4E)) is bound by residues Arg-118 and 124-128 (YNQYT). Ig-like C2-type domains follow at residues 139 to 237 (NTPN…LDVK), 241 to 325 (VIVE…VMYA), 327 to 412 (WKPT…VEFA), and 413 to 508 (PIIL…GAHR). N-linked (GlcNAc...) asparagine glycans are attached at residues Asn-223 and Asn-246. The cysteines at positions 261 and 305 are disulfide-linked. Residues Asn-315 and Asn-332 are each glycosylated (N-linked (GlcNAc...) asparagine). Residues Cys-347 and Cys-392 are joined by a disulfide bond. N-linked (GlcNAc...) asparagine glycosylation is present at Asn-406. 2 cysteine pairs are disulfide-bonded: Cys-421–Cys-430 and Cys-432–Cys-488. N-linked (GlcNAc...) asparagine glycosylation is found at Asn-450 and Asn-454. Residues 517–536 (VGAVVAFAILIAIVCYITQT) form a helical membrane-spanning segment. Residue Cys-531 is the site of S-palmitoyl cysteine attachment. Over 537 to 626 (RRKKNVTESP…LAEYAEIRVK (90 aa)) the chain is Cytoplasmic. Ser-545, Ser-547, and Ser-549 each carry phosphoserine. The interval 577–626 (LGSERRLLGLRGEPPELDLSYSHSDLGKRPTKDSYTLTEELAEYAEIRVK) is required for normal axon myelination in the central nervous system. The disordered stretch occupies residues 581 to 608 (RRLLGLRGEPPELDLSYSHSDLGKRPTK).

The protein belongs to the immunoglobulin superfamily. SIGLEC (sialic acid binding Ig-like lectin) family. Monomer and homodimer. Interacts (via the first three N-terminal Ig-like domains) with RTN4R and RTN4RL2. Interacts with isoform 2 of BSG. Post-translationally, N-glycosylated. In terms of processing, phosphorylated on tyrosine residues. Ubiquitinated, leading to proteasomal degradation. Detected in myelin. Detected in olfactory bulb and throughout the brain (at protein level). Detected in brain.

The protein resides in the cell membrane. Its subcellular location is the membrane raft. In terms of biological role, adhesion molecule that mediates interactions between myelinating cells and neurons by binding to neuronal sialic acid-containing gangliosides and to the glycoproteins RTN4R and RTN4RL2. Not required for initial myelination, but seems to play a role in the maintenance of normal axon myelination. Protects motoneurons against apoptosis, also after injury; protection against apoptosis is probably mediated via interaction with neuronal RTN4R and RTN4RL2. Required to prevent degeneration of myelinated axons in adults; this probably depends on binding to gangliosides on the axon cell membrane. Negative regulator of neurite outgrowth; in dorsal root ganglion neurons the inhibition is mediated primarily via binding to neuronal RTN4R or RTN4RL2 and to a lesser degree via binding to neuronal gangliosides. In cerebellar granule cells the inhibition is mediated primarily via binding to neuronal gangliosides. In sensory neurons, inhibition of neurite extension depends only partially on RTN4R, RTN4RL2 and gangliosides. Inhibits axon longitudinal growth. Inhibits axon outgrowth by binding to RTN4R. Preferentially binds to alpha-2,3-linked sialic acid. Binds ganglioside Gt1b. The protein is Myelin-associated glycoprotein (Mag) of Rattus norvegicus (Rat).